Consider the following 145-residue polypeptide: Basic phospholipase A2 cPm08 (145 aa).

Positions 1–21 are cleaved as a signal peptide; sequence MYPAHLLVLLAVCVSLLGASA. Residues 22 to 27 constitute a propeptide that is removed on maturation; the sequence is IPPLPL. 7 disulfide bridges follow: Cys38–Cys98, Cys54–Cys144, Cys56–Cys72, Cys71–Cys125, Cys78–Cys118, Cys87–Cys111, and Cys105–Cys116. The Ca(2+) site is built by Tyr55, Gly57, and Gly59. His75 is an active-site residue. Asp76 serves as a coordination point for Ca(2+). The active site involves Asp119.

Belongs to the phospholipase A2 family. Group I subfamily. D49 sub-subfamily. Requires Ca(2+) as cofactor. As to expression, expressed by the venom gland.

It localises to the secreted. It carries out the reaction a 1,2-diacyl-sn-glycero-3-phosphocholine + H2O = a 1-acyl-sn-glycero-3-phosphocholine + a fatty acid + H(+). Functionally, PLA2 catalyzes the calcium-dependent hydrolysis of the 2-acyl groups in 3-sn-phosphoglycerides. The chain is Basic phospholipase A2 cPm08 from Laticauda semifasciata (Black-banded sea krait).